The chain runs to 465 residues: Cysteine--tRNA ligase (465 aa).

Cys-27 is a Zn(2+) binding site. The 'HIGH' region motif lies at 29–39 (PTVYDFIHIGN). Zn(2+) is bound by residues Cys-207, His-232, and Glu-236. The 'KMSKS' region motif lies at 264–268 (KMSKS). Lys-267 serves as a coordination point for ATP.

It belongs to the class-I aminoacyl-tRNA synthetase family. As to quaternary structure, monomer. The cofactor is Zn(2+).

Its subcellular location is the cytoplasm. It carries out the reaction tRNA(Cys) + L-cysteine + ATP = L-cysteinyl-tRNA(Cys) + AMP + diphosphate. This Caldicellulosiruptor saccharolyticus (strain ATCC 43494 / DSM 8903 / Tp8T 6331) protein is Cysteine--tRNA ligase.